A 438-amino-acid polypeptide reads, in one-letter code: Chromosomal replication initiator protein DnaA (438 aa).

The interval 1 to 71 (MTTKEFLTII…CFEIYDGSKP (71 aa)) is domain I, interacts with DnaA modulators. A domain II region spans residues 71-100 (PTIEIKLSNEKKSKKEILKEQTQNESTEST). The tract at residues 101-315 (ILNPSYTFDS…GVLIRINASA (215 aa)) is domain III, AAA+ region. The ATP site is built by Gly145, Gly147, Lys148, and Thr149. The domain IV, binds dsDNA stretch occupies residues 316-438 (SLLNQEITLP…LKNKIINSRE (123 aa)).

Belongs to the DnaA family. As to quaternary structure, oligomerizes as a right-handed, spiral filament on DNA at oriC.

It is found in the cytoplasm. Functionally, plays an essential role in the initiation and regulation of chromosomal replication. ATP-DnaA binds to the origin of replication (oriC) to initiate formation of the DNA replication initiation complex once per cell cycle. Binds the DnaA box (a 9 base pair repeat at the origin) and separates the double-stranded (ds)DNA. Forms a right-handed helical filament on oriC DNA; dsDNA binds to the exterior of the filament while single-stranded (ss)DNA is stabiized in the filament's interior. The ATP-DnaA-oriC complex binds and stabilizes one strand of the AT-rich DNA unwinding element (DUE), permitting loading of DNA polymerase. After initiation quickly degrades to an ADP-DnaA complex that is not apt for DNA replication. Binds acidic phospholipids. This chain is Chromosomal replication initiator protein DnaA, found in Aliarcobacter butzleri (strain RM4018) (Arcobacter butzleri).